A 187-amino-acid chain; its full sequence is Peptidyl-tRNA hydrolase (187 aa).

Y14 lines the tRNA pocket. H19 (proton acceptor) is an active-site residue. Positions 64, 66, and 112 each coordinate tRNA.

It belongs to the PTH family. Monomer.

The protein localises to the cytoplasm. The enzyme catalyses an N-acyl-L-alpha-aminoacyl-tRNA + H2O = an N-acyl-L-amino acid + a tRNA + H(+). Functionally, hydrolyzes ribosome-free peptidyl-tRNAs (with 1 or more amino acids incorporated), which drop off the ribosome during protein synthesis, or as a result of ribosome stalling. In terms of biological role, catalyzes the release of premature peptidyl moieties from peptidyl-tRNA molecules trapped in stalled 50S ribosomal subunits, and thus maintains levels of free tRNAs and 50S ribosomes. This is Peptidyl-tRNA hydrolase from Clostridium acetobutylicum (strain ATCC 824 / DSM 792 / JCM 1419 / IAM 19013 / LMG 5710 / NBRC 13948 / NRRL B-527 / VKM B-1787 / 2291 / W).